We begin with the raw amino-acid sequence, 480 residues long: RAC-alpha serine/threonine-protein kinase (480 aa).

Residues 5 to 108 (AIVKEGWLHK…WATAIQTVAD (104 aa)) enclose the PH domain. N6-acetyllysine occurs at positions 14 and 20. 14 to 19 (KRGEYI) serves as a coordination point for 1D-myo-inositol 1,3,4,5-tetrakisphosphate. Residues 23-25 (RPR) and Asn-53 contribute to the 1D-myo-inositol 1,3,4,5-tetrakisphosphate site. Cys-60 and Cys-77 are joined by a disulfide. Residue Arg-86 coordinates 1D-myo-inositol 1,3,4,5-tetrakisphosphate. A disordered region spans residues 114 to 137 (EEETMDFRSGSPSDNSGAEEMEVS). At Ser-124 the chain carries Phosphoserine. A phosphoserine; alternate mark is found at Ser-126 and Ser-129. O-linked (GlcNAc) serine; alternate glycans are attached at residues Ser-126 and Ser-129. In terms of domain architecture, Protein kinase spans 150–408 (FEYLKLLGKG…AKEIMQHRFF (259 aa)). ATP is bound at residue 156 to 164 (LGKGTFGKV). Position 176 is a phosphotyrosine; by TNK2 (Tyr-176). Residue Lys-179 coordinates ATP. The active-site Proton acceptor is the Asp-274. Lys-284 is covalently cross-linked (Glycyl lysine isopeptide (Lys-Gly) (interchain with G-Cter in ubiquitin)). Cys-296 and Cys-310 form a disulfide bridge. O-linked (GlcNAc) threonine glycosylation occurs at Thr-305. Phosphothreonine; by IKKE, PDPK1 and TBK1 is present on Thr-308. The O-linked (GlcNAc) threonine glycan is linked to Thr-312. One can recognise an AGC-kinase C-terminal domain in the interval 409–480 (ANIVWQDVYE…QFSYSASGTA (72 aa)). Thr-448 carries the post-translational modification Phosphothreonine. At Thr-450 the chain carries Phosphothreonine; by MTOR. The interval 450 to 480 (TPPDQDDSMECVDSERRPHFPQFSYSASGTA) is disordered. O-linked (GlcNAc) serine; alternate glycosylation occurs at Ser-473. Residue Ser-473 is modified to Phosphoserine; by IKKE, MTOR, PRKDC and TBK1; alternate. Tyr-474 bears the Phosphotyrosine mark. A Phosphoserine; by CDK2 and MTOR modification is found at Ser-477. Residue Thr-479 is modified to Phosphothreonine; by CDK2 and MTOR.

It belongs to the protein kinase superfamily. AGC Ser/Thr protein kinase family. RAC subfamily. In terms of assembly, interacts with and phosphorylated by PDPK1. Interacts with AGAP2 (isoform 2/PIKE-A); the interaction occurs in the presence of guanine nucleotides. Interacts with AKTIP. Interacts (via PH domain) with MTCP1, TCL1A and TCL1B. Interacts with CDKN1B; the interaction phosphorylates CDKN1B promoting 14-3-3 binding and cell-cycle progression. Interacts with MAP3K5 and TRAF6. Interacts with BAD, PPP2R5B, STK3 and STK4. Interacts (via PH domain) with SIRT1. Interacts with SRPK2 in a phosphorylation-dependent manner. Interacts with TRIM13; the interaction ubiquitinates AKT1 leading to its proteasomal degradation. Interacts with RAF1. Interacts (via the C-terminus) with CCDC88A (via its C-terminus) and THEM4 (via its C-terminus). Interacts with GRB10; the interaction leads to GRB10 phosphorylation thus promoting YWHAE-binding. Interacts with KCTD20. Interacts with BTBD10. Interacts with PA2G4. Interacts with KIF14; the interaction is detected in the plasma membrane upon INS stimulation and promotes AKT1 phosphorylation. Interacts with FAM83B; activates the PI3K/AKT signaling cascade. Interacts with WDFY2 (via WD repeats 1-3). Forms a complex with WDFY2 and FOXO1. Interacts with FAM168A. Interacts with SYAP1 (via phosphorylated form and BSD domain); this interaction is enhanced in a mTORC2-mediated manner in response to epidermal growth factor (EGF) stimulation and activates AKT1. Interacts with PKHM3. Interacts with FKBP5/FKBP51; promoting interaction between Akt/AKT1 and PHLPP1, thereby enhancing dephosphorylation and subsequent activation of Akt/AKT1. Interacts with TMEM175; leading to formation of the lysoK(GF) complex. In terms of processing, O-GlcNAcylation at Thr-305 and Thr-312 inhibits activating phosphorylation at Thr-308 via disrupting the interaction between AKT1 and PDPK1. O-GlcNAcylation at Ser-473 also probably interferes with phosphorylation at this site. Post-translationally, phosphorylation on Thr-308, Ser-473 and Tyr-474 is required for full activity. Phosphorylation of the activation loop at Thr-308 by PDPK1/PDK1 is a prerequisite for full activation. Phosphorylation by mTORC2 in response to growth factors plays a key role in AKT1 activation: mTORC2 phosphorylates different sites depending on the context, such as Thr-450, Ser-473, Ser-477 or Thr-479, thereby facilitating subsequent phosphorylation of the activation loop by PDPK1/PDK1. Phosphorylation at Ser-473 by mTORC2 promotes ubiquitination and degradation by the proteasome. Also phosphorylated at Ser-477 and Thr-479 by CDK2, facilitating subsequent phosphorylation of the activation loop by PDPK1/PDK1. Activated TNK2 phosphorylates it on Tyr-176 resulting in its binding to the anionic plasma membrane phospholipid PA. This phosphorylated form localizes to the cell membrane, where it is targeted by PDPK1 and PDPK2 for further phosphorylations on Thr-308 and Ser-473 leading to its activation. Phosphorylated at Thr-308 and Ser-473 by IKBKE and TBK1. Ser-473 phosphorylation is enhanced by interaction with AGAP2 isoform 2 (PIKE-A). Ser-473 phosphorylation is enhanced by signaling through activated FLT3. Ser-473 is dephosphorylated by PHLPP. Dephosphorylated at Thr-308 and Ser-473 by PP2A phosphatase. The phosphorylated form of PPP2R5B is required for bridging AKT1 with PP2A phosphatase. Ser-473 is dephosphorylated by CPPED1, leading to termination of signaling. AIM2 acts as an inhibitor of AKT1 by inhibiting phosphorylation Ser-473: AIM2 acts both by inhibiting the activity of PRKDC/DNA-PK kinase and promoting dephosphorylation by PP2A phosphatase. Ubiquitinated; undergoes both 'Lys-48'- and 'Lys-63'-linked polyubiquitination. TRAF6-induced 'Lys-63'-linked AKT1 ubiquitination is critical for phosphorylation and activation. When ubiquitinated, it translocates to the plasma membrane, where it becomes phosphorylated. When fully phosphorylated and translocated into the nucleus, undergoes 'Lys-48'-polyubiquitination catalyzed by TTC3, leading to its degradation by the proteasome. Also ubiquitinated by TRIM13 leading to its proteasomal degradation. Ubiquitinated via 'Lys-48'-linked polyubiquitination by ZNRF1, leading to its degradation by the proteasome. Phosphorylated, undergoes 'Lys-48'-linked polyubiquitination preferentially at Lys-284 catalyzed by MUL1, leading to its proteasomal degradation. In terms of processing, acetylated on Lys-14 and Lys-20 by the histone acetyltransferases EP300 and KAT2B. Acetylation results in reduced phosphorylation and inhibition of activity. Deacetylated at Lys-14 and Lys-20 by SIRT1. SIRT1-mediated deacetylation relieves the inhibition. Post-translationally, cleavage by caspase-3/CASP3. Cleaved at the caspase-3 consensus site Asp-462 during apoptosis, resulting in down-regulation of the AKT signaling pathway and decreased cell survival. Widely expressed. Low levels found in liver with slightly higher levels present in thymus and testis.

Its subcellular location is the cytoplasm. The protein localises to the nucleus. It is found in the cell membrane. The protein resides in the mitochondrion intermembrane space. It carries out the reaction L-seryl-[protein] + ATP = O-phospho-L-seryl-[protein] + ADP + H(+). The catalysed reaction is L-threonyl-[protein] + ATP = O-phospho-L-threonyl-[protein] + ADP + H(+). With respect to regulation, three specific sites, one in the kinase domain (Thr-308) and the two other ones in the C-terminal regulatory region (Ser-473 and Tyr-474), need to be phosphorylated for its full activation. AKT1 is one of 3 closely related serine/threonine-protein kinases (AKT1, AKT2 and AKT3) called the AKT kinase, and which regulate many processes including metabolism, proliferation, cell survival, growth and angiogenesis. This is mediated through serine and/or threonine phosphorylation of a range of downstream substrates. Over 100 substrate candidates have been reported so far, but for most of them, no isoform specificity has been reported. AKT is responsible of the regulation of glucose uptake by mediating insulin-induced translocation of the SLC2A4/GLUT4 glucose transporter to the cell surface. Phosphorylation of PTPN1 at 'Ser-50' negatively modulates its phosphatase activity preventing dephosphorylation of the insulin receptor and the attenuation of insulin signaling. Phosphorylation of TBC1D4 triggers the binding of this effector to inhibitory 14-3-3 proteins, which is required for insulin-stimulated glucose transport. AKT also regulates the storage of glucose in the form of glycogen by phosphorylating GSK3A at 'Ser-21' and GSK3B at 'Ser-9', resulting in inhibition of its kinase activity. Phosphorylation of GSK3 isoforms by AKT is also thought to be one mechanism by which cell proliferation is driven. AKT also regulates cell survival via the phosphorylation of MAP3K5 (apoptosis signal-related kinase). Phosphorylation of 'Ser-83' decreases MAP3K5 kinase activity stimulated by oxidative stress and thereby prevents apoptosis. AKT mediates insulin-stimulated protein synthesis by phosphorylating TSC2 at 'Ser-939' and 'Thr-1462', thereby activating the mTORC1 signaling pathway, and leading to both phosphorylation of 4E-BP1 and in activation of RPS6KB1. Also regulates the mTORC1 signaling pathway by catalyzing phosphorylation of CASTOR1 and DEPDC5. AKT plays a role as key modulator of the AKT-mTOR signaling pathway controlling the tempo of the process of newborn neurons integration during adult neurogenesis, including correct neuron positioning, dendritic development and synapse formation. Part of a positive feedback loop of mTORC2 signaling by mediating phosphorylation of MAPKAP1/SIN1, promoting mTORC2 activation. AKT is involved in the phosphorylation of members of the FOXO factors (Forkhead family of transcription factors), leading to binding of 14-3-3 proteins and cytoplasmic localization. In particular, FOXO1 is phosphorylated at 'Thr-24', 'Ser-256' and 'Ser-319'. FOXO3 and FOXO4 are phosphorylated on equivalent sites. AKT has an important role in the regulation of NF-kappa-B-dependent gene transcription and positively regulates the activity of CREB1 (cyclic AMP (cAMP)-response element binding protein). The phosphorylation of CREB1 induces the binding of accessory proteins that are necessary for the transcription of pro-survival genes such as BCL2 and MCL1. AKT phosphorylates 'Ser-454' on ATP citrate lyase (ACLY), thereby potentially regulating ACLY activity and fatty acid synthesis. Activates the 3B isoform of cyclic nucleotide phosphodiesterase (PDE3B) via phosphorylation of 'Ser-273', resulting in reduced cyclic AMP levels and inhibition of lipolysis. Phosphorylates PIKFYVE on 'Ser-318', which results in increased PI(3)P-5 activity. The Rho GTPase-activating protein DLC1 is another substrate and its phosphorylation is implicated in the regulation cell proliferation and cell growth. Signals downstream of phosphatidylinositol 3-kinase (PI(3)K) to mediate the effects of various growth factors such as platelet-derived growth factor (PDGF), epidermal growth factor (EGF), insulin and insulin-like growth factor 1 (IGF1). AKT mediates the antiapoptotic effects of IGF1. Essential for the SPATA13-mediated regulation of cell migration and adhesion assembly and disassembly. May be involved in the regulation of the placental development. Phosphorylates STK4/MST1 at 'Thr-120' and 'Thr-387' leading to inhibition of its: kinase activity, nuclear translocation, autophosphorylation and ability to phosphorylate FOXO3. Phosphorylates STK3/MST2 at 'Thr-117' and 'Thr-384' leading to inhibition of its: cleavage, kinase activity, autophosphorylation at Thr-180, binding to RASSF1 and nuclear translocation. Phosphorylates SRPK2 and enhances its kinase activity towards SRSF2 and ACIN1 and promotes its nuclear translocation. Phosphorylates RAF1 at 'Ser-259' and negatively regulates its activity. Phosphorylation of BAD stimulates its pro-apoptotic activity. Phosphorylates KAT6A at 'Thr-369' and this phosphorylation inhibits the interaction of KAT6A with PML and negatively regulates its acetylation activity towards p53/TP53. Phosphorylates palladin (PALLD), modulating cytoskeletal organization and cell motility. Phosphorylates prohibitin (PHB), playing an important role in cell metabolism and proliferation. Phosphorylates CDKN1A, for which phosphorylation at 'Thr-145' induces its release from CDK2 and cytoplasmic relocalization. These recent findings indicate that the AKT1 isoform has a more specific role in cell motility and proliferation. Phosphorylates CLK2 thereby controlling cell survival to ionizing radiation. Phosphorylates PCK1 at 'Ser-90', reducing the binding affinity of PCK1 to oxaloacetate and changing PCK1 into an atypical protein kinase activity using GTP as donor. Also acts as an activator of TMEM175 potassium channel activity in response to growth factors: forms the lysoK(GF) complex together with TMEM175 and acts by promoting TMEM175 channel activation, independently of its protein kinase activity. Acts as a negative regulator of the cGAS-STING pathway by mediating phosphorylation of CGAS during mitosis, leading to its inhibition. Acts as a regulator of mitochondrial calcium uptake by mediating phosphorylation of MICU1 in the mitochondrial intermembrane space, impairing MICU1 maturation. Acts as an inhibitor of tRNA methylation by mediating phosphorylation of the N-terminus of METTL1, thereby inhibiting METTL1 methyltransferase activity. In response to LPAR1 receptor pathway activation, phosphorylates Rabin8/RAB3IP which alters its activity and phosphorylates WDR44 which induces WDR44 binding to Rab11, thereby switching Rab11 vesicular function from preciliary trafficking to endocytic recycling. The chain is RAC-alpha serine/threonine-protein kinase (Akt1) from Mus musculus (Mouse).